We begin with the raw amino-acid sequence, 585 residues long: Glutamate decarboxylase 2 (585 aa).

The tract at residues 1–24 (MASPGSGFWSFGSEDGSGDPENSG) is disordered. Ser3, Ser6, Ser10, and Ser13 each carry phosphoserine. S-palmitoyl cysteine attachment occurs at residues Cys30 and Cys45. 181-183 (QLS) contacts substrate. Lys396 is subject to N6-(pyridoxal phosphate)lysine. Position 558 (Arg558) interacts with substrate.

It belongs to the group II decarboxylase family. As to quaternary structure, homodimer. It depends on pyridoxal 5'-phosphate as a cofactor. Post-translationally, phosphorylated; which does not affect kinetic parameters or subcellular location. In terms of processing, palmitoylated; which is required for presynaptic clustering.

Its subcellular location is the cytoplasm. It is found in the cytosol. The protein resides in the cytoplasmic vesicle. It localises to the presynaptic cell membrane. The protein localises to the golgi apparatus membrane. It carries out the reaction L-glutamate + H(+) = 4-aminobutanoate + CO2. Functionally, catalyzes the production of GABA. The chain is Glutamate decarboxylase 2 (GAD2) from Sus scrofa (Pig).